The chain runs to 174 residues: Mediator of RNA polymerase II transcription subunit 30 (174 aa).

Positions 113–166 (VEDDSSKLEDRMANQLRAASEERREVLEVNKKLKQKNQQLKMIMDQLRNLIWEI) form a coiled coil.

The protein belongs to the Mediator complex subunit 30 family. As to quaternary structure, component of the Mediator complex.

It localises to the nucleus. Functionally, component of the Mediator complex, a coactivator involved in the regulated transcription of nearly all RNA polymerase II-dependent genes. Mediator functions as a bridge to convey information from gene-specific regulatory proteins to the basal RNA polymerase II transcription machinery. Mediator is recruited to promoters by direct interactions with regulatory proteins and serves as a scaffold for the assembly of a functional preinitiation complex with RNA polymerase II and the general transcription factors. This Danio rerio (Zebrafish) protein is Mediator of RNA polymerase II transcription subunit 30 (med30).